The following is a 315-amino-acid chain: Methionyl-tRNA formyltransferase (315 aa).

A (6S)-5,6,7,8-tetrahydrofolate-binding site is contributed by 113 to 116 (SLLP).

The protein belongs to the Fmt family.

It carries out the reaction L-methionyl-tRNA(fMet) + (6R)-10-formyltetrahydrofolate = N-formyl-L-methionyl-tRNA(fMet) + (6S)-5,6,7,8-tetrahydrofolate + H(+). Functionally, attaches a formyl group to the free amino group of methionyl-tRNA(fMet). The formyl group appears to play a dual role in the initiator identity of N-formylmethionyl-tRNA by promoting its recognition by IF2 and preventing the misappropriation of this tRNA by the elongation apparatus. In Edwardsiella ictaluri (strain 93-146), this protein is Methionyl-tRNA formyltransferase.